We begin with the raw amino-acid sequence, 441 residues long: Chromosomal replication initiator protein DnaA (441 aa).

The segment at 1 to 80 (MQNDVLARWE…MHQEISLQFI (80 aa)) is domain I, interacts with DnaA modulators. Residues 80-102 (ILAGQEVDQPKPKERSSEETYIN) are domain II. A domain III, AAA+ region region spans residues 103-320 (ILNPRYTFDT…GALIRVSAFS (218 aa)). Positions 147, 149, 150, and 151 each coordinate ATP. Residues 321 to 441 (SLEQRDATPQ…IKELKKRIGE (121 aa)) are domain IV, binds dsDNA.

Belongs to the DnaA family. In terms of assembly, oligomerizes as a right-handed, spiral filament on DNA at oriC.

It is found in the cytoplasm. In terms of biological role, plays an essential role in the initiation and regulation of chromosomal replication. ATP-DnaA binds to the origin of replication (oriC) to initiate formation of the DNA replication initiation complex once per cell cycle. Binds the DnaA box (a 9 base pair repeat at the origin) and separates the double-stranded (ds)DNA. Forms a right-handed helical filament on oriC DNA; dsDNA binds to the exterior of the filament while single-stranded (ss)DNA is stabiized in the filament's interior. The ATP-DnaA-oriC complex binds and stabilizes one strand of the AT-rich DNA unwinding element (DUE), permitting loading of DNA polymerase. After initiation quickly degrades to an ADP-DnaA complex that is not apt for DNA replication. Binds acidic phospholipids. The protein is Chromosomal replication initiator protein DnaA of Desulforamulus reducens (strain ATCC BAA-1160 / DSM 100696 / MI-1) (Desulfotomaculum reducens).